The sequence spans 276 residues: Diaminopimelate epimerase (276 aa).

Substrate contacts are provided by Asn-13, Gln-46, and Asn-66. Catalysis depends on Cys-75, which acts as the Proton donor. Residues 76–77 (GN), Asn-159, Asn-192, and 210–211 (ER) each bind substrate. The active-site Proton acceptor is Cys-219. Residue 220-221 (GT) coordinates substrate.

Belongs to the diaminopimelate epimerase family. In terms of assembly, homodimer.

The protein resides in the cytoplasm. It carries out the reaction (2S,6S)-2,6-diaminopimelate = meso-2,6-diaminopimelate. It functions in the pathway amino-acid biosynthesis; L-lysine biosynthesis via DAP pathway; DL-2,6-diaminopimelate from LL-2,6-diaminopimelate: step 1/1. In terms of biological role, catalyzes the stereoinversion of LL-2,6-diaminopimelate (L,L-DAP) to meso-diaminopimelate (meso-DAP), a precursor of L-lysine and an essential component of the bacterial peptidoglycan. The protein is Diaminopimelate epimerase of Pseudomonas syringae pv. syringae (strain B728a).